The sequence spans 347 residues: Olfactory receptor 2M2 (347 aa).

Topologically, residues 1–25 (MAWENQTFNSDFILLGIFNHSPPHT) are extracellular. N-linked (GlcNAc...) asparagine glycosylation occurs at asparagine 5. Residues 26 to 49 (FLFFLVLGIFLVAFMGNSVMVLLI) traverse the membrane as a helical segment. At 50 to 57 (YLDTQLHT) the chain is on the cytoplasmic side. A helical transmembrane segment spans residues 58–79 (PMYFLLSQLSLMDLMLICTTVP). Residues 80–100 (KMAFNYLSGSKSISMAGCVTQ) lie on the Extracellular side of the membrane. The cysteines at positions 97 and 189 are disulfide-linked. Residues 101–120 (IFFYISLSGSECFLLAVMAY) traverse the membrane as a helical segment. Over 121–139 (DRYIAICHPLRYTNLMNPK) the chain is Cytoplasmic. The chain crosses the membrane as a helical span at residues 140–158 (ICGLMATFSWILGSTDGII). Residues 159 to 195 (DAVATFSFSFCGSREIAHFFCEFPSLLILSCNDTSIF) are Extracellular-facing. An N-linked (GlcNAc...) asparagine glycan is attached at asparagine 190. Residues 196–219 (EEVIFICCIVMLVFPVAIIIASYA) traverse the membrane as a helical segment. Over 220–236 (RVILAVIHMGSGEGRCK) the chain is Cytoplasmic. Residues 237-259 (AFTTCSSHLMVVGMYYGAALFMY) form a helical membrane-spanning segment. The Extracellular segment spans residues 260–272 (IRPTSDHSPTQDK). Residues 273–292 (MVSVFYTILTPMLNPLIYSL) traverse the membrane as a helical segment. The Cytoplasmic segment spans residues 293-347 (RNKEVTRAFMKILGKGKSESELPHKLYVLLFAKFFFLISIFFYDVKILALIMYIA).

The protein belongs to the G-protein coupled receptor 1 family.

The protein localises to the cell membrane. Its function is as follows. Odorant receptor. This is Olfactory receptor 2M2 (OR2M2) from Homo sapiens (Human).